The primary structure comprises 260 residues: HTH-type transcriptional repressor NanR (260 aa).

The disordered stretch occupies residues 1-21 (MSAFDHSSDDTQETIGNSLRR). One can recognise an HTH gntR-type domain in the interval 27–95 (KKLSEMVEEE…NGERARVSRP (69 aa)). Residues 55-74 (ERELMAFFNVGRPSVREALA) constitute a DNA-binding region (H-T-H motif).

The protein belongs to the NanR family.

In terms of biological role, transcriptional repressor that controls expression of the genes required for the catabolism of sialic acids. The polypeptide is HTH-type transcriptional repressor NanR (Klebsiella aerogenes (strain ATCC 13048 / DSM 30053 / CCUG 1429 / JCM 1235 / KCTC 2190 / NBRC 13534 / NCIMB 10102 / NCTC 10006 / CDC 819-56) (Enterobacter aerogenes)).